A 307-amino-acid polypeptide reads, in one-letter code: Elongation factor Ts (307 aa).

Residues T80–V83 are involved in Mg(2+) ion dislocation from EF-Tu.

This sequence belongs to the EF-Ts family.

It is found in the cytoplasm. In terms of biological role, associates with the EF-Tu.GDP complex and induces the exchange of GDP to GTP. It remains bound to the aminoacyl-tRNA.EF-Tu.GTP complex up to the GTP hydrolysis stage on the ribosome. The chain is Elongation factor Ts from Rhizorhabdus wittichii (strain DSM 6014 / CCUG 31198 / JCM 15750 / NBRC 105917 / EY 4224 / RW1) (Sphingomonas wittichii).